Consider the following 366-residue polypeptide: MKFVISRNELGNLIKKVQNVVPQSTPIPVLTHVLIESCNDELVFTATDLTVSTRCVVKAKVYESGSVTIPSRRFFQLIRELTEANIEVAANSGEMATITSGSSCFRLLSMGKEDFPMLPDMQNALRFTLDSEQLKDMFQRTSFAVSREESRYVLTGVLLSISNGTMTVVGTDGKRLAKIDTNISLDPSFSGDYIIPIKAVEEIIRMASEDVQSTIFLDQTKIAVECGNTLLVTKLLSGEFPDFSPVISTQSSVQLNLHREELISLLKQVALFTNESSHSVKFSFSPGELTLTANCTKVGEGKVSMAVNYTGETLEIAFNPFFFLDILKHSRDELVQLGISDSYNPGIITDSTRSLFVIMPMRLHDD.

Belongs to the beta sliding clamp family. As to quaternary structure, forms a ring-shaped head-to-tail homodimer around DNA which binds and tethers DNA polymerases and other proteins to the DNA. The DNA replisome complex has a single clamp-loading complex (3 tau and 1 each of delta, delta', psi and chi subunits) which binds 3 Pol III cores (1 core on the leading strand and 2 on the lagging strand) each with a beta sliding clamp dimer. Additional proteins in the replisome are other copies of gamma, psi and chi, Ssb, DNA helicase and RNA primase.

The protein resides in the cytoplasm. Its function is as follows. Confers DNA tethering and processivity to DNA polymerases and other proteins. Acts as a clamp, forming a ring around DNA (a reaction catalyzed by the clamp-loading complex) which diffuses in an ATP-independent manner freely and bidirectionally along dsDNA. Initially characterized for its ability to contact the catalytic subunit of DNA polymerase III (Pol III), a complex, multichain enzyme responsible for most of the replicative synthesis in bacteria; Pol III exhibits 3'-5' exonuclease proofreading activity. The beta chain is required for initiation of replication as well as for processivity of DNA replication. The polypeptide is Beta sliding clamp (dnaN) (Chlamydia muridarum (strain MoPn / Nigg)).